Consider the following 300-residue polypeptide: Protein MoxJ (300 aa).

A signal peptide spans 1 to 25; that stretch reads MSLVNGRRRTAASVVALTAALTALA.

It localises to the periplasm. Functionally, may be involved in the assemblage of active methanol dehydrogenase and/or its cofactor PQQ in the periplasm. The sequence is that of Protein MoxJ (moxJ) from Methylorubrum extorquens (strain ATCC 14718 / DSM 1338 / JCM 2805 / NCIMB 9133 / AM1) (Methylobacterium extorquens).